Consider the following 146-residue polypeptide: Ribosome maturation factor RimP (146 aa).

The protein belongs to the RimP family.

It is found in the cytoplasm. Required for maturation of 30S ribosomal subunits. This Helicobacter pylori (strain P12) protein is Ribosome maturation factor RimP.